The chain runs to 603 residues: Polypeptide N-acetylgalactosaminyltransferase 10 (603 aa).

The Cytoplasmic segment spans residues 1 to 11; that stretch reads MRRKEKRLLQA. A helical; Signal-anchor for type II membrane protein membrane pass occupies residues 12–31; sequence VALVLAALVLLPNVGLWALY. At 32–603 the chain is on the lumenal side; that stretch reads RERQPDGTPG…STVLEKFNRN (572 aa). The interval 38–59 is disordered; that stretch reads GTPGGSGAAVAPAAGQGSHSRQ. Over residues 45-55 the composition is skewed to low complexity; sequence AAVAPAAGQGS. Asn-124 and Asn-146 each carry an N-linked (GlcNAc...) asparagine glycan. Cystine bridges form between Cys-135/Cys-365, Cys-356/Cys-432, Cys-471/Cys-488, Cys-523/Cys-538, and Cys-563/Cys-578. The catalytic subdomain A stretch occupies residues 144–253; sequence LPNTSIIIPF…VNWLPPLLDR (110 aa). His-154, Glu-156, Asp-185, and Arg-214 together coordinate substrate. Mn(2+) is bound at residue Asp-237. Ser-238 serves as a coordination point for substrate. His-239 serves as a coordination point for Mn(2+). Positions 311-373 are catalytic subdomain B; the sequence is PFESPVMAGG…PCSRVGHIYR (63 aa). Trp-342 contributes to the substrate binding site. A Mn(2+)-binding site is contributed by His-370. Residues Arg-373 and Tyr-378 each coordinate substrate. The flexible loop stretch occupies residues 373–384; it reads RKYVPYKVPAGV. The region spanning 458–590 is the Ricin B-type lectin domain; sequence AAWGEIRNVG…SSLTQQWLFE (133 aa). Asn-593 is a glycosylation site (N-linked (GlcNAc...) asparagine).

This sequence belongs to the glycosyltransferase 2 family. GalNAc-T subfamily. Mn(2+) serves as cofactor. Widely expressed. Expressed at high level in small intestine, and at intermediate levels in stomach, pancreas, ovary, thyroid gland and spleen. Weakly expressed in other tissues.

Its subcellular location is the golgi apparatus membrane. It catalyses the reaction L-seryl-[protein] + UDP-N-acetyl-alpha-D-galactosamine = a 3-O-[N-acetyl-alpha-D-galactosaminyl]-L-seryl-[protein] + UDP + H(+). The catalysed reaction is L-threonyl-[protein] + UDP-N-acetyl-alpha-D-galactosamine = a 3-O-[N-acetyl-alpha-D-galactosaminyl]-L-threonyl-[protein] + UDP + H(+). It functions in the pathway protein modification; protein glycosylation. In terms of biological role, catalyzes the initial reaction in O-linked oligosaccharide biosynthesis, the transfer of an N-acetyl-D-galactosamine residue to a serine or threonine residue on the protein receptor. Has activity toward Muc5Ac and EA2 peptide substrates. This Homo sapiens (Human) protein is Polypeptide N-acetylgalactosaminyltransferase 10 (GALNT10).